The chain runs to 435 residues: MAGNFSEIESQGNISLKFGFLGLGMGGCAIAAECANKETQIKNNKYPYRAILVNTNSQDFNKIEIKNAGNVRKIQLEGYEQGAARNPQVGEEAFVKHETKIFETVKQEFEDRDFIWITCGLGGGTGTGALLKAIEMLYEHDYNFGLLLTLPRDAEALKVLENATSRIRSIAMNQEAFGSIVLIDNAKLYRKFEEENPSALANEYTSYSNKYIADALHEINLVTSSFTPFSDTHFDASEFAQVINTPGVLSLAKLELKSNQLDTENPLGYLTQLGNALEKGVLYDTEREELESAKKSALSIVTSPLRASRLYNFSFLNQMENFLKDRTPYVDERPIAPYVNKHTAKKEEDIVKFYSVVAGLPLPKRVSDIIDEITRIKEEREQANSKKSNAVLNKLFAFDDSVQEEKPKKKKLNFGAEPEAEVADDSQPTKKKLSF.

GTP-binding positions include 25–26 (MG), 124–126 (GTG), N185, and N209. Positions 403-435 (QEEKPKKKKLNFGAEPEAEVADDSQPTKKKLSF) are disordered.

This sequence belongs to the FtsZ family. TubZ subfamily. In terms of assembly, polymerizes to form two-stranded filaments and bundles at higher concentration in the presence of GTP. Binds to the TubR-tubC protein DNA complex.

The protein resides in the cytoplasm. The enzyme catalyses GTP + H2O = GDP + phosphate + H(+). Its activity is regulated as follows. GTPase inhibited by GTP-gamma-S, which also stabilizes filaments. A tubulin-like, filament forming GTPase; the motor component of the type III plasmid partition system which ensures correct segregation of the pXO1 plasmid. Essential for plasmid replication. The filaments seed from a DNA centromere-like site (tubC)-TubR complex which extends to surround the TubZ filaments. Highly dynamic filaments grow at the plus end and depolymerize at the minus end, a process called treadmilling. TubR-tubC complexes track the depolymerizing minus end of the filament, probably pulling plasmid within the cell. Has a high GTPase activity; in the presence of GTP assembles into dynamic filaments which bind almost exclusively GDP. Filament formation is cooperative, requiring a critical concentration. Formation occurs very quickly and is followed by disassembly as GTP is consumed. Small amounts of GTP-gamma-S stabilize filaments. Has high GTP and dGTPase activity, 6-fold lower ATPase activity. Forms filaments in the presence of ATP that also disassemble. Weakly binds DNA in a GTP-dependent, non-sequence-specific manner; GTP hydrolysis is not required for DNA-binding. The polypeptide is Tubulin-like protein TubZ (Bacillus anthracis).